A 213-amino-acid chain; its full sequence is MTKPIVVTGTDTGIGKTVFAAALAGALDAFYWKPVQAGIEDETDRQAVLRLSGLPDARLLPEAYRLNTPASPHLAAEIDGVTIDAEALALPEIDGPLVVEGAGGLLVPLTRAITYIDIFARWRAPVVLCARTTLGTINHTLLSIEALRARAIPLLGVAFIGDENVESERVIVQIGRVPRLGRLPRLVEVTADALRAAFAQNFNTDDFLKDPAS.

13 to 18 serves as a coordination point for ATP; that stretch reads GIGKTV. Mg(2+) is bound at residue threonine 17. Residue lysine 33 is part of the active site. A Mg(2+)-binding site is contributed by glutamate 100. ATP contacts are provided by residues 100 to 103 and 184 to 186; these read EGAG and PRL.

This sequence belongs to the dethiobiotin synthetase family. As to quaternary structure, homodimer. Mg(2+) is required as a cofactor.

The protein resides in the cytoplasm. It carries out the reaction (7R,8S)-7,8-diammoniononanoate + CO2 + ATP = (4R,5S)-dethiobiotin + ADP + phosphate + 3 H(+). The protein operates within cofactor biosynthesis; biotin biosynthesis; biotin from 7,8-diaminononanoate: step 1/2. Catalyzes a mechanistically unusual reaction, the ATP-dependent insertion of CO2 between the N7 and N8 nitrogen atoms of 7,8-diaminopelargonic acid (DAPA, also called 7,8-diammoniononanoate) to form a ureido ring. The polypeptide is ATP-dependent dethiobiotin synthetase BioD (Rhodopseudomonas palustris (strain HaA2)).